Reading from the N-terminus, the 277-residue chain is Large ribosomal subunit protein uL2 (277 aa).

The interval 223 to 277 (VAMNPVDHPHGGGEGRTSTGRHPVTPWGKRTLGKKTRKRKASDKYIIRSRRARKR) is disordered. Residues 253–277 (TLGKKTRKRKASDKYIIRSRRARKR) show a composition bias toward basic residues.

This sequence belongs to the universal ribosomal protein uL2 family. In terms of assembly, part of the 50S ribosomal subunit. Forms a bridge to the 30S subunit in the 70S ribosome.

In terms of biological role, one of the primary rRNA binding proteins. Required for association of the 30S and 50S subunits to form the 70S ribosome, for tRNA binding and peptide bond formation. It has been suggested to have peptidyltransferase activity; this is somewhat controversial. Makes several contacts with the 16S rRNA in the 70S ribosome. The polypeptide is Large ribosomal subunit protein uL2 (Halothermothrix orenii (strain H 168 / OCM 544 / DSM 9562)).